A 7388-amino-acid polypeptide reads, in one-letter code: Microtubule-actin cross-linking factor 1, isoforms 1/2/3/4/5 (7388 aa).

The disordered stretch occupies residues 1–47; sequence MSSSDEETLSERSCRSERSCRSERSYRSERSGSLSPCPPGDTLPWNL. Positions 1–295 are actin-binding; that stretch reads MSSSDEETLS…VITYVSSIYD (295 aa). Ser-4 carries the post-translational modification Phosphoserine. Residues 9 to 30 are compositionally biased toward basic and acidic residues; the sequence is LSERSCRSERSCRSERSYRSER. Phosphoserine is present on residues Ser-35 and Ser-57. Calponin-homology (CH) domains lie at 78–181 and 194–298; these read RVQK…LHFQ and MSAK…DAFP. LRR repeat units follow at residues 148–171 and 240–264; these read QRQV…LTLG and LVDM…VAER. Ser-280 is subject to Phosphoserine. LRR repeat units lie at residues 377-399 and 441-464; these read LYKL…YHPN and LNCE…LESG. Ser-814 bears the Phosphoserine mark. The region spanning 868–925 is the SH3 domain; that stretch reads KNTISVKAVCDYRQIEITICKNDECVLEDNSQRTKWKVISPTGNEAMVPSVCFLIPPP. The LRR 5 repeat unit spans residues 1050 to 1073; it reads ISELKNIRLRLEEYEQRVVKRIQS. Ser-1122 bears the Phosphoserine mark. 3 LRR repeats span residues 1128–1154, 1187–1210, and 1257–1282; these read VPTL…VYLN, LADL…VKDK, and HRVI…DYRA. Ser-1367 and Ser-1376 each carry phosphoserine. 5 Plectin repeats span residues 1577–1621, 1654–1696, 1769–1809, 1811–1848, and 1855–1886; these read LVLL…RELQ, LKIL…VLES, RLLE…CAIL, RQLQ…VILE, and GLLW…KILS. Ser-2006 and Ser-2051 each carry phosphoserine. The segment at 2051–2085 is disordered; the sequence is SQNKEYPDREDCTTEKGKKTTVETEDSSVENPEQD. The span at 2055 to 2072 shows a compositional bias: basic and acidic residues; sequence EYPDREDCTTEKGKKTTV. At Ser-2077 the chain carries Phosphoserine. Plectin repeat units follow at residues 2290 to 2332, 2367 to 2410, 2411 to 2437, 2501 to 2543, 2581 to 2612, and 2686 to 2730; these read LNVL…KLME, NVLM…LERQ, VVTG…GLVD, RLLT…LKRV, EVQA…LTNE, and LKVL…ASHQ. Disordered regions lie at residues 3013–3034 and 3104–3174; these read EHDS…GKEA and SEPF…NECK. Residues 3115 to 3124 show a composition bias toward basic and acidic residues; that stretch reads EGLHYQESDG. Ser-3122 bears the Phosphoserine mark. The span at 3129-3158 shows a compositional bias: polar residues; it reads TGPSQISKTDKSFQGTTRQETNYQDSWVTS. 2 LRR repeats span residues 3239–3262 and 3264–3283; these read LTGE…SIED and VTQR…LFKG. Basic and acidic residues predominate over residues 3321–3332; it reads EKTPQEKLRESP. The interval 3321–3350 is disordered; it reads EKTPQEKLRESPGSEQTPFMTAPEGKGNGG. Ser-3331 carries the post-translational modification Phosphoserine. LRR repeat units lie at residues 3646–3669 and 3696–3720; these read QQDL…IQNR and LTAL…TRVA. 2 Spectrin repeats span residues 3883–3957 and 4000–4108; these read ELQK…NSFK and QYHQ…SLLQ. Ser-3927 bears the Phosphoserine mark. Residues 3936-3958 form an LRR 13 repeat; that stretch reads KGDLRFVTISGQKVLDMENSFKE. LRR repeat units lie at residues 4125-4150 and 4261-4287; these read LQSI…VIQE and IQEL…ELSS. A Spectrin 3 repeat occupies 4466–4574; the sequence is RMEEVHKEAN…TVARQRQLEE (109 aa). Phosphoserine occurs at positions 4495, 4496, and 4521. LRR repeat units lie at residues 4511-4534, 4601-4624, and 4769-4792; these read KAFL…LAGL, GVLG…QFML, and KKRL…RINR. 2 Spectrin repeats span residues 4800-4904 and 4909-5012; these read TQQF…SRLK and KAQK…SLEE. 2 positions are modified to phosphoserine: Ser-4836 and Ser-4962. 3 LRR repeats span residues 5051 to 5076, 5172 to 5194, and 5281 to 5304; these read NKNL…YLRN, NKIH…MLEE, and KEQV…LIQS. 3 Spectrin repeats span residues 5236–5341, 5348–5450, and 5455–5557; these read EDFY…QLQE, KFQD…QLED, and AKQF…LRTL. The residue at position 5435 (Thr-5435) is a Phosphothreonine. The tract at residues 5583–5603 is disordered; sequence EELATSGGQSPTGEQIPQFQQ. Over residues 5588-5603 the composition is skewed to polar residues; the sequence is SGGQSPTGEQIPQFQQ. LRR repeat units lie at residues 5695-5719 and 5804-5828; these read MALG…AFSI and AQLP…QLRE. Spectrin repeat units lie at residues 5783–5885, 6005–6110, 6115–6219, 6225–6328, 6333–6439, 6443–6547, 6552–6658, 6665–6766, and 6771–6874; these read NQFW…ALDE, LAEK…KLED, AVQY…HKLE, LGQF…QQLQ, QAQG…KLEE, LATE…RSLD, RAKQ…KLEE, QFMD…RLEQ, and AEVF…QRLE. A phosphoserine mark is found at Ser-5808 and Ser-6032. Lys-6210 carries the post-translational modification N6-acetyllysine. One copy of the LRR 24 repeat lies at 6496-6519; it reads RDQIIELDQTGNQLKFLSQKQDVV. The tract at residues 6951–6981 is disordered; it reads PTHAPFIEKSRSGGRKSLSQPTPPPMPILSQ. Position 6967 is a phosphoserine (Ser-6967). 2 EF-hand domains span residues 7041–7076 and 7077–7112; these read HKKS…SKFP and TTKL…NKDA. Residues Asp-7054, Asp-7056, Asp-7058, Lys-7060, Glu-7065, Asp-7090, Asp-7092, Asp-7094, Tyr-7096, and Glu-7101 each coordinate Ca(2+). The GAR domain maps to 7117 to 7189; the sequence is TDADKIEDEV…EFLVKNDPCR (73 aa). The segment at 7117 to 7388 is C-terminal tail; sequence TDADKIEDEV…ASPRTPGPKR (272 aa). The segment at 7205–7388 is disordered; the sequence is PEGASQGMTP…ASPRTPGPKR (184 aa). Residues 7225–7259 show a composition bias toward low complexity; sequence SSRAASPTRSSSSASQSNHSCTSMPSSPATPASGT. At Thr-7254 the chain carries Phosphothreonine. Polar residues predominate over residues 7275–7299; sequence TFHSSRTSLAGDTSNSSSPASTGAK. Phosphoserine is present on residues Ser-7279 and Ser-7292. The span at 7310–7324 shows a compositional bias: low complexity; that stretch reads SRPGSRAGSRAGSRA. The interval 7313-7328 is 4 X 4 AA tandem repeats of [GS]-S-R-[AR]; it reads GSRAGSRAGSRASSRR. Ser-7330 and Ser-7333 each carry phosphoserine. Over residues 7339 to 7361 the composition is skewed to polar residues; that stretch reads ETQSACSDTSESSAAGGQGNSRR.

Belongs to the plakin or cytolinker family. In terms of assembly, isoform 2: Interacts with MAPRE1, CLASP1, CLASP2, AXIN1 and LRP6. Isoform 2: Found in a complex composed of MACF1, APC, AXIN1, CTNNB1 and GSK3B. Isoform 2: Interacts with GOLGA4. Isoform 2: Interacts with CAMSAP3. Post-translationally, phosphorylated on serine residues in the C-terminal tail by GSK3B. Phosphorylation inhibits microtubule-binding and this plays a critical role in bulge stem cell migration and skin wound repair. Wnt-signaling can repress phosphorylation. Isoform 2: Ubiquitously expressed. Isoform 1: Expressed in cell lines NCI-H460, A-549 and HaCaT. Isoform 4: Expressed in heart, lung, pituitary and placenta, not found in brain, kidney, liver, pancreas or skeletal muscle.

Its subcellular location is the cytoplasm. It is found in the cytoskeleton. The protein localises to the golgi apparatus. The protein resides in the cell membrane. It localises to the cell projection. Its subcellular location is the ruffle membrane. Its function is as follows. F-actin-binding protein which plays a role in cross-linking actin to other cytoskeletal proteins and also binds to microtubules. Plays an important role in ERBB2-dependent stabilization of microtubules at the cell cortex. Acts as a positive regulator of Wnt receptor signaling pathway and is involved in the translocation of AXIN1 and its associated complex (composed of APC, CTNNB1 and GSK3B) from the cytoplasm to the cell membrane. Has actin-regulated ATPase activity and is essential for controlling focal adhesions (FAs) assembly and dynamics. Interaction with CAMSAP3 at the minus ends of non-centrosomal microtubules tethers microtubules minus-ends to actin filaments, regulating focal adhesion size and cell migration. May play role in delivery of transport vesicles containing GPI-linked proteins from the trans-Golgi network through its interaction with GOLGA4. Plays a key role in wound healing and epidermal cell migration. Required for efficient upward migration of bulge cells in response to wounding and this function is primarily rooted in its ability to coordinate microtubule dynamics and polarize hair follicle stem cells. As a regulator of actin and microtubule arrangement and stabilization, it plays an essential role in neurite outgrowth, branching and spine formation during brain development. This chain is Microtubule-actin cross-linking factor 1, isoforms 1/2/3/4/5, found in Homo sapiens (Human).